The sequence spans 361 residues: Caffeic acid 3-O-methyltransferase 2 (361 aa).

Position 128 to 134 (128 to 134) interacts with substrate; that stretch reads MNQDKVL. A substrate binding region spans residues 160–178; sequence AFEYHGTDPRFNKVFNQGM. 5 residues coordinate S-adenosyl-L-methionine: G206, D229, D249, M250, and K263. The active-site Proton acceptor is the H267.

This sequence belongs to the class I-like SAM-binding methyltransferase superfamily. Cation-independent O-methyltransferase family. COMT subfamily. As to quaternary structure, homodimer.

The catalysed reaction is (E)-caffeate + S-adenosyl-L-methionine = (E)-ferulate + S-adenosyl-L-homocysteine + H(+). It functions in the pathway aromatic compound metabolism; phenylpropanoid biosynthesis. In terms of biological role, catalyzes the conversion of caffeic acid to ferulic acid and of 5-hydroxyferulic acid to sinapic acid. The resulting products may subsequently be converted to the corresponding alcohols that are incorporated into lignins. This chain is Caffeic acid 3-O-methyltransferase 2 (COMT2), found in Ocimum basilicum (Sweet basil).